The primary structure comprises 444 residues: Tubulin beta chain (444 aa).

Gln-11, Glu-69, Ser-138, Gly-142, Thr-143, Gly-144, Asn-204, and Asn-226 together coordinate GTP. Glu-69 is a Mg(2+) binding site. The tract at residues 423–444 (QQYQDATAEEEGEFDDEEEMDV) is disordered. Residues 429-444 (TAEEEGEFDDEEEMDV) show a composition bias toward acidic residues.

This sequence belongs to the tubulin family. In terms of assembly, dimer of alpha and beta chains. A typical microtubule is a hollow water-filled tube with an outer diameter of 25 nm and an inner diameter of 15 nM. Alpha-beta heterodimers associate head-to-tail to form protofilaments running lengthwise along the microtubule wall with the beta-tubulin subunit facing the microtubule plus end conferring a structural polarity. Microtubules usually have 13 protofilaments but different protofilament numbers can be found in some organisms and specialized cells. The cofactor is Mg(2+).

The protein resides in the cytoplasm. Its subcellular location is the cytoskeleton. Tubulin is the major constituent of microtubules, a cylinder consisting of laterally associated linear protofilaments composed of alpha- and beta-tubulin heterodimers. Microtubules grow by the addition of GTP-tubulin dimers to the microtubule end, where a stabilizing cap forms. Below the cap, tubulin dimers are in GDP-bound state, owing to GTPase activity of alpha-tubulin. This chain is Tubulin beta chain, found in Euplotes focardii.